A 78-amino-acid chain; its full sequence is Antitoxin VapB27 (78 aa).

In terms of domain architecture, SpoVT-AbrB spans 1 to 45; sequence MKAVVDAAGRIVVPKPLREALGLQPGSTVEISRYGAGLHLIPTGR.

This sequence belongs to the VapB family. As to quaternary structure, interacts with cognate toxin VapC27 and non-cognate toxins MazF6 and VapC40. Interaction with MazF6 and MazF9 partially neutralizes the toxins.

Antitoxin component of a type II toxin-antitoxin (TA) system. Cognate toxin is VapC27. Upon expression in E.coli partially counteracts the ribonuclease activity of non-cognate toxins MazF6 and MazF9. This chain is Antitoxin VapB27 (vapB27), found in Mycobacterium tuberculosis (strain ATCC 25618 / H37Rv).